The primary structure comprises 237 residues: Probable F-box protein At1g53815 (237 aa).

The F-box domain occupies 41-72; sequence ISNILSRLPLKSKAKCRCVSKLWSSIIRRPNY.

This chain is Probable F-box protein At1g53815, found in Arabidopsis thaliana (Mouse-ear cress).